Reading from the N-terminus, the 248-residue chain is Cobalt transport protein CbiM (248 aa).

Positions 1–31 (MLKVIKKYRKFITFLMIGLVYTLAYPATAHA) are cleaved as a signal peptide. Transmembrane regions (helical) follow at residues 39-59 (LPPR…IYGL), 75-95 (VMLA…LPSV), 107-127 (LGTV…VLLF), 139-159 (TLGA…YAVW), 173-195 (LFLC…LAIV), and 213-233 (IYAI…VIVY).

Belongs to the CbiM family. In terms of assembly, forms an energy-coupling factor (ECF) transporter complex composed of an ATP-binding protein (A component, CbiO), a transmembrane protein (T component, CbiQ) and 2 possible substrate-capture proteins (S components, CbiM and CbiN) of unknown stoichimetry.

It is found in the cell membrane. It participates in cofactor biosynthesis; adenosylcobalamin biosynthesis. In terms of biological role, part of the energy-coupling factor (ECF) transporter complex CbiMNOQ involved in cobalt import. This is Cobalt transport protein CbiM from Limosilactobacillus reuteri (strain DSM 20016) (Lactobacillus reuteri).